The following is a 141-amino-acid chain: MLNRTVLVGRLTKDPELRSTPNGVNVGTFTLAVNRTFTNAQGEREADFINVVVFKKQAENVKNYLSKGSLAGVDGRLQTRNYENKDGQRVFVTEVVADSVQFLEPKNNNQQQNNNYQQQRQTQTGNNPFDNNADSIEDLPF.

The SSB domain occupies 1–104; the sequence is MLNRTVLVGR…VVADSVQFLE (104 aa). The interval 104–141 is disordered; the sequence is EPKNNNQQQNNNYQQQRQTQTGNNPFDNNADSIEDLPF. The segment covering 107–127 has biased composition (low complexity); that stretch reads NNNQQQNNNYQQQRQTQTGNN.

In terms of assembly, homotetramer.

The sequence is that of Single-stranded DNA-binding protein 2 (ssb-p) from Staphylococcus aureus (strain Mu50 / ATCC 700699).